The chain runs to 289 residues: Polyisoprenoid diphosphate/phosphate phosphohydrolase PLPP6 (289 aa).

Positions 1 to 81 (MQSPRRNAEG…SSQALPPQLP (81 aa)) are disordered. The Cytoplasmic portion of the chain corresponds to 1–126 (MQSPRRNAEG…ESSSWGSMRP (126 aa)). Phosphoserine occurs at positions 23, 30, and 64. A helical transmembrane segment spans residues 127–147 (LMKLLEISGHGIPWLLGTLYC). Residues 148–158 (LSRSDSWAGRE) are Lumenal-facing. The helical transmembrane segment at 159–179 (VLMNLLFALLLDLLLVSLIKG) threads the bilayer. A phosphatase sequence motif I region spans residues 178 to 186 (KGLVRRRRP). Over 180-222 (LVRRRRPAHNQMDMFFTISVDKYSFPSGHTTRAALVSRFILNH) the chain is Cytoplasmic. Residues 205–208 (PSGH) form a phosphatase sequence motif II region. The active-site Proton donors is the H208. Residues 223-243 (LVLAIPLRVLVVLWAFILGLS) traverse the membrane as a helical segment. The phosphatase sequence motif III stretch occupies residues 243–254 (SRVMLGRHNVTD). At 244-254 (RVMLGRHNVTD) the chain is on the lumenal side. H250 (nucleophile) is an active-site residue. A helical transmembrane segment spans residues 255-275 (VAFGFFLGYMQYSIVDYCWLS). Residues 276–289 (PRTAPVLFVLWNQP) lie on the Cytoplasmic side of the membrane.

This sequence belongs to the PA-phosphatase related phosphoesterase family. Post-translationally, phosphorylation by PKC activates the phosphatase activity towards presqualene diphosphate.

Its subcellular location is the endoplasmic reticulum membrane. It localises to the nucleus envelope. The protein localises to the nucleus inner membrane. It catalyses the reaction presqualene diphosphate + H2O = presqualene phosphate + phosphate + H(+). It carries out the reaction presqualene phosphate + H2O = presqualene alcohol + phosphate. The enzyme catalyses (2E,6E)-farnesyl diphosphate + H2O = (2E,6E)-farnesyl phosphate + phosphate + H(+). The catalysed reaction is (2E,6E)-farnesyl phosphate + H2O = (2E,6E)-farnesol + phosphate. It catalyses the reaction (2E,6E,10E)-geranylgeranyl diphosphate + H2O = (2E,6E,10E)-geranylgeranyl phosphate + phosphate + H(+). It carries out the reaction (2E,6E,10E)-geranylgeranyl phosphate + H2O = (2E,6E,10E)-geranylgeraniol + phosphate. The enzyme catalyses (2E)-geranyl diphosphate + H2O = (2E)-geranyl phosphate + phosphate + H(+). The catalysed reaction is (2E)-geranyl phosphate + H2O = (2E)-geraniol + phosphate. It catalyses the reaction 1,2-dihexadecanoyl-sn-glycero-3-phosphate + H2O = 1,2-dihexadecanoyl-sn-glycerol + phosphate. Its function is as follows. Magnesium-independent polyisoprenoid diphosphatase that catalyzes the sequential dephosphorylation of presqualene, farnesyl, geranyl and geranylgeranyl diphosphates. Functions in the innate immune response through the dephosphorylation of presqualene diphosphate which acts as a potent inhibitor of the signaling pathways contributing to polymorphonuclear neutrophils activation. May regulate the biosynthesis of cholesterol and related sterols by dephosphorylating presqualene and farnesyl diphosphate, two key intermediates in this biosynthetic pathway. May also play a role in protein prenylation by acting on farnesyl diphosphate and its derivative geranylgeranyl diphosphate, two precursors for the addition of isoprenoid anchors to membrane proteins. Has a lower activity towards phosphatidic acid (PA), but through phosphatidic acid dephosphorylation may participate in the biosynthesis of phospholipids and triacylglycerols. May also act on ceramide-1-P, lysophosphatidic acid (LPA) and sphing-4-enine 1-phosphate/sphingosine-1-phosphate. In Bos taurus (Bovine), this protein is Polyisoprenoid diphosphate/phosphate phosphohydrolase PLPP6.